We begin with the raw amino-acid sequence, 377 residues long: Secreted LysM effector Lys2 (377 aa).

The signal sequence occupies residues 1-22; the sequence is MVRQSIGLIALQLLNLVSVAQA. The span at 104–119 shows a compositional bias: low complexity; that stretch reads TSSSTATTTSQKPTAT. A disordered region spans residues 104 to 124; the sequence is TSSSTATTTSQKPTATVSPLP. 2 LysM domains span residues 135-182 and 207-253; these read KYYN…YVCV and KYYK…YYCV.

It belongs to the secreted LysM effector family.

Functionally, might have a role in sequestration of chitin oligosaccharides (breakdown products of fungal cell walls that are released during invasion and act as triggers of host immunity) to dampen host defense. This chain is Secreted LysM effector Lys2, found in Pochonia chlamydosporia (strain 123) (Metacordyceps chlamydosporia).